A 482-amino-acid polypeptide reads, in one-letter code: Mannose-1-phosphate guanylyltransferase 2 (482 aa).

This sequence belongs to the mannose-6-phosphate isomerase type 2 family.

The enzyme catalyses alpha-D-mannose 1-phosphate + GTP + H(+) = GDP-alpha-D-mannose + diphosphate. The protein operates within nucleotide-sugar biosynthesis; GDP-alpha-D-mannose biosynthesis; GDP-alpha-D-mannose from alpha-D-mannose 1-phosphate (GTP route): step 1/1. In terms of biological role, involved in GDP-mannose biosynthesis which serves as the activated sugar nucleotide precursor for mannose residues in cell surface polysaccharides. This enzyme participates in synthesis of the LPS O antigen. In Escherichia coli O157:H7, this protein is Mannose-1-phosphate guanylyltransferase 2 (manC2).